Reading from the N-terminus, the 763-residue chain is Lysine-specific histone demethylase 1 homolog 2 (763 aa).

Positions 53 to 152 (QRETETEALI…FGVSAAFPAS (100 aa)) constitute an SWIRM domain. FAD-binding residues include E192, R194, R200, and E571.

This sequence belongs to the flavin monoamine oxidase family. FAD serves as cofactor.

In terms of biological role, probable histone demethylase. This chain is Lysine-specific histone demethylase 1 homolog 2, found in Oryza sativa subsp. japonica (Rice).